A 622-amino-acid chain; its full sequence is Sodium/potassium/calcium exchanger 4 (622 aa).

A signal peptide spans 1-38; that stretch reads MALRGTLRPLKVRRRREMLPQQVGFVCAVLALVCCASG. Over 39–97 the chain is Extracellular; it reads LFGSLGHKTASASKRVLPDTWRNRKLMAPVNGTQTAKNCTDPAIHEFPTDLFSNKERQH. 2 N-linked (GlcNAc...) asparagine glycosylation sites follow: Asn69 and Asn76. Residues 98 to 118 traverse the membrane as a helical segment; sequence GAVLLHILGALYMFYALAIVC. Residues 119 to 142 are Cytoplasmic-facing; that stretch reads DDFFVPSLEKICERLHLSEDVAGA. The stretch at 139 to 179 is one Alpha-1 repeat; the sequence is VAGATFMAAGSSTPELFASVIGVFITHGDVGVGTIVGSAVF. Residues 143–163 traverse the membrane as a helical segment; that stretch reads TFMAAGSSTPELFASVIGVFI. Residues 164-172 lie on the Extracellular side of the membrane; sequence THGDVGVGT. A helical transmembrane segment spans residues 173–193; sequence IVGSAVFNILCIIGVCGLFAG. The Cytoplasmic portion of the chain corresponds to 194–200; that stretch reads QVVRLTW. A helical membrane pass occupies residues 201 to 221; the sequence is WAVCRDSVYYTISVIVLIVFI. The Extracellular portion of the chain corresponds to 222-224; the sequence is YDE. A helical transmembrane segment spans residues 225–245; the sequence is QIVWWEGLVLIILYVFYILIM. Over 246 to 457 the chain is Cytoplasmic; sequence KYNVKMQAFF…RWEKFFMVTF (212 aa). The interval 358–410 is disordered; sequence ANGVSSKPLQNGRHENIENGNVPVENPEDPQQNQEQQPPPQPPPPEPEPVEAD. Low complexity predominate over residues 380–393; that stretch reads PVENPEDPQQNQEQ. Residues 394 to 404 are compositionally biased toward pro residues; the sequence is QPPPQPPPPEP. A helical transmembrane segment spans residues 458–478; that stretch reads ITATLWIAVFSYIMVWLVTII. Position 479 (Gly479) is a topological domain, extracellular. A helical transmembrane segment spans residues 480-500; the sequence is YTLGIPDVIMGITFLAAGTSV. An Alpha-2 repeat occupies 495-526; that stretch reads AAGTSVPDCMASLIVARQGLGDMAVSNTIGSN. Residues 501-526 lie on the Cytoplasmic side of the membrane; sequence PDCMASLIVARQGLGDMAVSNTIGSN. A helical membrane pass occupies residues 527 to 547; sequence VFDILVGLGVPWGLQTMVVNY. The Extracellular segment spans residues 548-557; the sequence is GSTVKINSRG. The helical transmembrane segment at 558 to 578 threads the bilayer; it reads LVYSVVLLLGSVALTVLGIHL. The Cytoplasmic portion of the chain corresponds to 579–586; sequence NKWRLDRK. A helical transmembrane segment spans residues 587–607; the sequence is LGVYVLVLYAIFLCFSIMIEF. At 608–622 the chain is on the extracellular side; that stretch reads NVFTFVNLPMCREDD.

Belongs to the Ca(2+):cation antiporter (CaCA) (TC 2.A.19) family. SLC24A subfamily. Expressed abundantly in all regions of the brain, aorta, lung and thymus. Expressed at lower levels in the stomach and intestine.

Its subcellular location is the cell membrane. The protein localises to the cytoplasm. The catalysed reaction is Ca(2+)(out) + K(+)(out) + 4 Na(+)(in) = Ca(2+)(in) + K(+)(in) + 4 Na(+)(out). Functionally, calcium, potassium:sodium antiporter that transports 1 Ca(2+) and 1 K(+) in exchange for 4 Na(+). Controls the rapid response termination and proper regulation of adaptation in olfactory sensory neurons (OSNs) which subsequently influences how odor information is encoded and perceived. May play a role in calcium transport during amelogenesis. The chain is Sodium/potassium/calcium exchanger 4 from Homo sapiens (Human).